Reading from the N-terminus, the 153-residue chain is RNA-binding protein OPG065 (153 aa).

One can recognise a Z-binding domain in the interval 1-33 (MEKREVNKALYDLQRSAMVYSSNDTPPRWSTTM). Positions 22–34 (SNDTPPRWSTTMD) are enriched in polar residues. The segment at 22 to 44 (SNDTPPRWSTTMDADTRPTDSDA) is disordered. In terms of domain architecture, DRBM spans 80 to 147 (NPVTVINEYC…AKLAVDKLLS (68 aa)).

This sequence belongs to the orthopoxvirus OPG065 family. In terms of assembly, interacts with host G1P2/ISG15. Interacts with host EIF2AK2/PKR. Interacts with host ZBP1.

RNA-binding protein that plays a role in the inhibition of multiple cellular antiviral responses activated by double-stranded RNA (dsRNA), such as inhibition of PKR activation, necroptosis, and IFN-mediated antiviral activities. Recognizes and binds Z-RNA structures via its Z-binding domain and dsRNA via its DRBM domain: RNA-binding activity is required to escape host ZBP1-dependent necroptosis. Mechanistically, the Z-binding domain binds Z-RNAs that are produced during vaccinia virus infection, thereby competing with Z-RNA detection by host ZBP1, suppressing ZBP1-dependent necroptosis. Acts as a key inhibitor of the interferon response by blocking the phosphorylation and subsequent activation of IRF3 and IRF7 kinases that are required for interferon-alpha gene expression. Inhibits NF-kappa-B activation and the ubiquitin-like protein ISG15, which is an early antiviral protein. The binding with host ISG15 subsequently blocks host ISGylation. This is RNA-binding protein OPG065 (OPG065) from Monkeypox virus.